A 445-amino-acid chain; its full sequence is uncharacterized protein (445 aa).

The segment at 139–160 (TESQKDLEYERKANKTKEENQQ) is disordered.

This is an uncharacterized protein from Mycoplasma pneumoniae (strain ATCC 29342 / M129 / Subtype 1) (Mycoplasmoides pneumoniae).